The chain runs to 186 residues: Secreted chorismate mutase (186 aa).

The first 30 residues, 1–30 (MQPTHTLTRLTVIGKLIIASSFFLSLAVQA), serve as a signal peptide directing secretion. A Chorismate mutase domain is found at 31–107 (QQCGQTAPLI…AAKAIQYRYR (77 aa)). A disulfide bridge links Cys-33 with Cys-148. Residues Arg-43, Lys-54, Asp-63, 99 to 103 (AKAIQ), and Arg-127 contribute to the substrate site.

Homodimer.

It localises to the periplasm. The catalysed reaction is chorismate = prephenate. The protein operates within metabolic intermediate biosynthesis; prephenate biosynthesis; prephenate from chorismate: step 1/1. In terms of biological role, catalyzes the Claisen rearrangement of chorismate to prephenate. May play some role in the pathogenicity. This Yersinia pestis protein is Secreted chorismate mutase (pheA2).